A 732-amino-acid chain; its full sequence is MSESAVPADIIMQPFAKLSEESLKLAVESLNELKIPNTTLASTTAEQQQQQQQQQQPPSSSTTKEGGATTTQDNKLTANGGTTADNNNNKPMVINKLDYLPIIKSNIWDESYGWLTTIPNSESFAQIIGTTIKEGKDIKKTLYILDPKQLKESFNLLGLDQQENSIDTNEMIYKIEEEMMMQGIFKILFKLDKKTLESFCRDLKIQIKDDMGALCDSIMSTMYDLEESPDTTTTAAATTTTTTTTAAVPPPPTTTTTTTTTTPTIASTPTVVPPTNTTTTTSTTSPIPSTTPLTNTTSIAAATTTTTTTPTDNSGTNSPNKETTPSKAKKGVPKKAPTKKQPATKSPTTETAGIVPTTTTTPPQATTTTTTTTPPTNIIAPKTNSTIISPPTEAPSKPAPKTSKSQATTTTTTTTVQSTTKNTEKSQNLTNTEQPKKKLRSSLDKPSSDKPLTPTLPGKRERKPLPLDPVHLQPEQKSKPGSGSAQSASTAKPTPTTTTTTTTTTKPKSTIAKTSTSTTIKSKPTTKKKETTKIITNGKRKRKQDNNNGNEEAAAEEQEEEEEEDNSNGIQNNNSSNDVEINSENESDREQNDNFSNFGSSNGNGNGLLSEDDDDDDDDDNNNNIMDYQSTASSEIKGYYTHDRKWICPSFDYIKKGIERGFLQNNFNLSDLLEYCKIHDLPKNKTKTKTIKIILDFVETGTAPQQTSKPKKLVGKAAAKKKLQDQQELASS.

Disordered regions lie at residues 38–90 (TTLA…NNNK) and 226–629 (EESP…MDYQ). Residues 47-56 (QQQQQQQQQQ) are compositionally biased toward low complexity. Positions 57 to 76 (PPSSSTTKEGGATTTQDNKL) are enriched in polar residues. Low complexity-rich tracts occupy residues 77–89 (TANG…NNNN), 231–247 (TTTT…TTAA), and 254–318 (TTTT…GTNS). Positions 327–338 (KAKKGVPKKAPT) are enriched in basic residues. 3 stretches are compositionally biased toward low complexity: residues 339-383 (KKQP…APKT), 401-421 (KTSK…STTK), and 487-523 (SAST…IKSK). The span at 553-566 (AAAEEQEEEEEEDN) shows a compositional bias: acidic residues. Low complexity-rich tracts occupy residues 567-577 (SNGIQNNNSSN) and 593-609 (DNFS…NGLL). The span at 610-621 (SEDDDDDDDDDN) shows a compositional bias: acidic residues.

This is an uncharacterized protein from Dictyostelium discoideum (Social amoeba).